A 502-amino-acid chain; its full sequence is Maturase K (502 aa).

Belongs to the intron maturase 2 family. MatK subfamily.

It is found in the plastid. It localises to the chloroplast. Its function is as follows. Usually encoded in the trnK tRNA gene intron. Probably assists in splicing its own and other chloroplast group II introns. This Sisymbrium irio (London rocket) protein is Maturase K.